Consider the following 434-residue polypeptide: Zinc finger protein Pegasus (434 aa).

Positions 33–57 (VSSDKEAETLQGAGTDSDQNGLDHP) are disordered. 3 C2H2-type zinc fingers span residues 82–104 (LKCRYCNYASKGTARLIEHIRIH), 110–132 (HRCHLCPFASAYERHLEAHMRSH), and 138–161 (YKCELCSFRCSDRSNLSHHRRRKH). Residues 260–274 (GQLSSLPPDTQNPAS) show a composition bias toward polar residues. The tract at residues 260 to 357 (GQLSSLPPDT…PSTPAPALPA (98 aa)) is disordered. The segment covering 296 to 313 (CASAVSTSVAQSSSPASP) has biased composition (low complexity). The segment covering 337-349 (RTSTPSISNSQPS) has biased composition (polar residues). C2H2-type zinc fingers lie at residues 364–386 (HHCQHCDMYFADNILYTIHMGCH) and 392–419 (FQCNICGCKCKNKYDFACHFARGACCQH).

The protein belongs to the Ikaros C2H2-type zinc-finger protein family. Probably self-associates.

It localises to the nucleus. Its function is as follows. Transcriptional repressor that binds the core 5'GNNTGTNG-3' DNA consensus sequence. This Xenopus tropicalis (Western clawed frog) protein is Zinc finger protein Pegasus (ikzf5).